We begin with the raw amino-acid sequence, 465 residues long: Light-independent protochlorophyllide reductase subunit N (465 aa).

Residues cysteine 22, cysteine 47, and cysteine 107 each coordinate [4Fe-4S] cluster.

The protein belongs to the BchN/ChlN family. Protochlorophyllide reductase is composed of three subunits; ChlL, ChlN and ChlB. Forms a heterotetramer of two ChlB and two ChlN subunits. [4Fe-4S] cluster serves as cofactor.

It localises to the plastid. Its subcellular location is the chloroplast. It carries out the reaction chlorophyllide a + oxidized 2[4Fe-4S]-[ferredoxin] + 2 ADP + 2 phosphate = protochlorophyllide a + reduced 2[4Fe-4S]-[ferredoxin] + 2 ATP + 2 H2O. It participates in porphyrin-containing compound metabolism; chlorophyll biosynthesis (light-independent). Its function is as follows. Component of the dark-operative protochlorophyllide reductase (DPOR) that uses Mg-ATP and reduced ferredoxin to reduce ring D of protochlorophyllide (Pchlide) to form chlorophyllide a (Chlide). This reaction is light-independent. The NB-protein (ChlN-ChlB) is the catalytic component of the complex. This chain is Light-independent protochlorophyllide reductase subunit N, found in Marchantia polymorpha (Common liverwort).